A 276-amino-acid chain; its full sequence is Bis(5'-nucleosyl)-tetraphosphatase, symmetrical (276 aa).

Belongs to the Ap4A hydrolase family.

It catalyses the reaction P(1),P(4)-bis(5'-adenosyl) tetraphosphate + H2O = 2 ADP + 2 H(+). Hydrolyzes diadenosine 5',5'''-P1,P4-tetraphosphate to yield ADP. This chain is Bis(5'-nucleosyl)-tetraphosphatase, symmetrical, found in Legionella pneumophila subsp. pneumophila (strain Philadelphia 1 / ATCC 33152 / DSM 7513).